A 119-amino-acid polypeptide reads, in one-letter code: Large ribosomal subunit protein uL18 (119 aa).

It belongs to the universal ribosomal protein uL18 family. In terms of assembly, part of the 50S ribosomal subunit; part of the 5S rRNA/L5/L18/L25 subcomplex. Contacts the 5S and 23S rRNAs.

Its function is as follows. This is one of the proteins that bind and probably mediate the attachment of the 5S RNA into the large ribosomal subunit, where it forms part of the central protuberance. The sequence is that of Large ribosomal subunit protein uL18 from Malacoplasma penetrans (strain HF-2) (Mycoplasma penetrans).